The following is a 357-amino-acid chain: Uroporphyrinogen decarboxylase (357 aa).

Residues 27-31 (RQAGR), D77, Y154, S209, and H330 contribute to the substrate site.

This sequence belongs to the uroporphyrinogen decarboxylase family. In terms of assembly, homodimer.

It localises to the cytoplasm. It carries out the reaction uroporphyrinogen III + 4 H(+) = coproporphyrinogen III + 4 CO2. Its pathway is porphyrin-containing compound metabolism; protoporphyrin-IX biosynthesis; coproporphyrinogen-III from 5-aminolevulinate: step 4/4. Functionally, catalyzes the decarboxylation of four acetate groups of uroporphyrinogen-III to yield coproporphyrinogen-III. This chain is Uroporphyrinogen decarboxylase, found in Acinetobacter baumannii (strain SDF).